Here is an 812-residue protein sequence, read N- to C-terminus: ISWI one complex protein 2 (812 aa).

Disordered stretches follow at residues 1-21 (MRTK…AGAA), 614-646 (MGNS…KRKP), 679-704 (AKQR…LEEL), and 762-812 (QTGS…PPTN). Polar residues predominate over residues 627–638 (PQSTLEPSTKSS). Positions 673–714 (ELKIIRAKQRKQQEDRERRKKMKEEKKRLEELAKKRELTESV) form a coiled coil. Over residues 683 to 704 (KQQEDRERRKKMKEEKKRLEEL) the composition is skewed to basic and acidic residues. Low complexity predominate over residues 769 to 796 (PQAPQAPQTSQASIQPQQQQQQQQQQQP).

As to quaternary structure, component of the ISW1B complex, which at least consists of ISW1, IOC2 and IOC4.

The protein localises to the nucleus. Its function is as follows. Functions as a component of the ISW1B complex, which acts in remodeling the chromatin by catalyzing an ATP-dependent alteration in the structure of nucleosomal DNA. The ISW1B complex acts within coding regions to control the amount of RNA polymerase II released into productive elongation and to coordinate elongation with termination and pre-mRNA processing. The polypeptide is ISWI one complex protein 2 (IOC2) (Saccharomyces cerevisiae (strain ATCC 204508 / S288c) (Baker's yeast)).